Reading from the N-terminus, the 494-residue chain is Rho GTPase-activating protein 19 (494 aa).

A2 carries the N-acetylalanine modification. Phosphoserine occurs at positions 7 and 31. Residues 102-308 (MSLKRKEKGV…FMIKHSQKLF (207 aa)) enclose the Rho-GAP domain. Disordered regions lie at residues 349–368 (KSQKRNRVDSCPHQEETQHH) and 399–421 (QSLTQTPGREPSTSQVQKRARSR). The segment covering 354 to 368 (NRVDSCPHQEETQHH) has biased composition (basic and acidic residues). Residues 399 to 415 (QSLTQTPGREPSTSQVQ) show a composition bias toward polar residues. Phosphoserine is present on residues S422, S438, and S470. The residue at position 478 (T478) is a Phosphothreonine.

As to expression, strong expression in fetal heart, brain, placenta, lung, liver, skeletal muscle, kidney and pancreas. Weak expression in adult pancreas, spleen, thymus, and ovary.

The protein localises to the nucleus. Functionally, GTPase activator for the Rho-type GTPases by converting them to an inactive GDP-bound state. The sequence is that of Rho GTPase-activating protein 19 (ARHGAP19) from Homo sapiens (Human).